The chain runs to 54 residues: UPF0391 membrane protein Pnap_0920 (54 aa).

The next 2 helical transmembrane spans lie at 6 to 26 and 30 to 50; these read VVFL…IAAG and IAKI…VVSL.

Belongs to the UPF0391 family.

The protein localises to the cell membrane. This is UPF0391 membrane protein Pnap_0920 from Polaromonas naphthalenivorans (strain CJ2).